A 172-amino-acid chain; its full sequence is MISPLFFASEGGFGLNLDLFDANIVNLAIVIFGLYKFLPPFVGGILERRRVAILADLKDAEERLLKATEALAHAKKDLAAAHQKAEQIREDCKLRAEAIRLDSEKRTVEEMARVKQGATADLNAEASRASAQLRREAARMAIENALSALPGKLNADAQAQLVSQSIKNLGEA.

Residues 27 to 47 (LAIVIFGLYKFLPPFVGGILE) traverse the membrane as a helical segment.

Belongs to the ATPase B chain family. In terms of assembly, F-type ATPases have 2 components, F(1) - the catalytic core - and F(0) - the membrane proton channel. F(1) has five subunits: alpha(3), beta(3), gamma(1), delta(1), epsilon(1). F(0) has four main subunits: a(1), b(1), b'(1) and c(10-14). The alpha and beta chains form an alternating ring which encloses part of the gamma chain. F(1) is attached to F(0) by a central stalk formed by the gamma and epsilon chains, while a peripheral stalk is formed by the delta, b and b' chains.

It localises to the cellular thylakoid membrane. F(1)F(0) ATP synthase produces ATP from ADP in the presence of a proton or sodium gradient. F-type ATPases consist of two structural domains, F(1) containing the extramembraneous catalytic core and F(0) containing the membrane proton channel, linked together by a central stalk and a peripheral stalk. During catalysis, ATP synthesis in the catalytic domain of F(1) is coupled via a rotary mechanism of the central stalk subunits to proton translocation. Functionally, component of the F(0) channel, it forms part of the peripheral stalk, linking F(1) to F(0). The protein is ATP synthase subunit b of Prochlorococcus marinus (strain MIT 9303).